Here is a 185-residue protein sequence, read N- to C-terminus: Protein GrpE (185 aa).

Residues 1–22 (MTASQEPVDQAPESNEPAPAVP) are disordered.

This sequence belongs to the GrpE family. As to quaternary structure, homodimer.

It is found in the cytoplasm. Its function is as follows. Participates actively in the response to hyperosmotic and heat shock by preventing the aggregation of stress-denatured proteins, in association with DnaK and GrpE. It is the nucleotide exchange factor for DnaK and may function as a thermosensor. Unfolded proteins bind initially to DnaJ; upon interaction with the DnaJ-bound protein, DnaK hydrolyzes its bound ATP, resulting in the formation of a stable complex. GrpE releases ADP from DnaK; ATP binding to DnaK triggers the release of the substrate protein, thus completing the reaction cycle. Several rounds of ATP-dependent interactions between DnaJ, DnaK and GrpE are required for fully efficient folding. The polypeptide is Protein GrpE (Bordetella petrii (strain ATCC BAA-461 / DSM 12804 / CCUG 43448)).